The sequence spans 336 residues: Aspartate--ammonia ligase (336 aa).

The protein belongs to the class-II aminoacyl-tRNA synthetase family. AsnA subfamily.

The protein resides in the cytoplasm. It carries out the reaction L-aspartate + NH4(+) + ATP = L-asparagine + AMP + diphosphate + H(+). It functions in the pathway amino-acid biosynthesis; L-asparagine biosynthesis; L-asparagine from L-aspartate (ammonia route): step 1/1. The protein is Aspartate--ammonia ligase of Lactobacillus johnsonii (strain CNCM I-12250 / La1 / NCC 533).